Consider the following 108-residue polypeptide: UPF0145 protein THA_1434 (108 aa).

Belongs to the UPF0145 family.

This Thermosipho africanus (strain TCF52B) protein is UPF0145 protein THA_1434.